Reading from the N-terminus, the 698-residue chain is Ion-translocating oxidoreductase complex subunit C (698 aa).

4Fe-4S ferredoxin-type domains lie at 366–397 (TEMG…QQLY) and 407–436 (KARN…VQYY). The [4Fe-4S] cluster site is built by Cys377, Cys380, Cys383, Cys387, Cys416, Cys419, Cys422, and Cys426.

This sequence belongs to the 4Fe4S bacterial-type ferredoxin family. RnfC subfamily. In terms of assembly, the complex is composed of six subunits: RnfA, RnfB, RnfC, RnfD, RnfE and RnfG. [4Fe-4S] cluster serves as cofactor.

It localises to the cell inner membrane. Part of a membrane-bound complex that couples electron transfer with translocation of ions across the membrane. The polypeptide is Ion-translocating oxidoreductase complex subunit C (Yersinia pseudotuberculosis serotype O:3 (strain YPIII)).